The following is a 276-amino-acid chain: Large ribosomal subunit protein uL2c (276 aa).

Disordered stretches follow at residues 1–51 and 224–276; these read MAIR…GIIT and VVMN…RRRK. Composition is skewed to polar residues over residues 7–18 and 27–37; these read RTYTPSTRNRPI and SNPQKKLTSGQ.

The protein belongs to the universal ribosomal protein uL2 family. As to quaternary structure, part of the 50S ribosomal subunit.

Its subcellular location is the plastid. The protein localises to the chloroplast. This Cycas taitungensis (Prince sago) protein is Large ribosomal subunit protein uL2c (rpl2).